A 260-amino-acid chain; its full sequence is Indole-3-glycerol phosphate synthase (260 aa).

The protein belongs to the TrpC family.

It catalyses the reaction 1-(2-carboxyphenylamino)-1-deoxy-D-ribulose 5-phosphate + H(+) = (1S,2R)-1-C-(indol-3-yl)glycerol 3-phosphate + CO2 + H2O. It participates in amino-acid biosynthesis; L-tryptophan biosynthesis; L-tryptophan from chorismate: step 4/5. The chain is Indole-3-glycerol phosphate synthase from Lactiplantibacillus plantarum (strain ATCC BAA-793 / NCIMB 8826 / WCFS1) (Lactobacillus plantarum).